Here is a 252-residue protein sequence, read N- to C-terminus: Carbonic anhydrase (252 aa).

The signal sequence occupies residues 1 to 26 (MPRFPRTLPRLTAVLLLACTAFSAAA). Positions 31-252 (THWGYTGHDS…QPLNARVVIE (222 aa)) constitute an Alpha-carbonic anhydrase domain. A disulfide bridge links Cys-54 with Cys-207. His-92 serves as the catalytic Proton acceptor. Zn(2+)-binding residues include His-118, His-120, and His-137. Residue 203–204 (TT) participates in substrate binding.

It belongs to the alpha-carbonic anhydrase family. Homodimer. Zn(2+) is required as a cofactor.

It is found in the periplasm. It carries out the reaction hydrogencarbonate + H(+) = CO2 + H2O. Functionally, reversible hydration of carbon dioxide. The polypeptide is Carbonic anhydrase (cah) (Neisseria gonorrhoeae).